Here is a 401-residue protein sequence, read N- to C-terminus: MSFDLASRLASRRAEDLYRQRPLLESAQGPDVVVDGQPLLAFCSNDYLGLANHPEVIAALRAGAERWGVGGGASHLVVGHSGPHHELELALAEFTGRPRALLFSTGYMANLGAVTALVGKGDTVLEDRLNHASLLDAGLLSGARFSRYLHNDPASLAARLDKAEGNTLVVTDGVFSMDGNLADLPALAAVAQARGAWLMVDDAHGFGPLGASGGGIVEHFGLGQEQVPVLIGTLGKGFGTAGAFVAGSEELIETLIQYARPYIYTTSQPPAVACATLKSLELLRRESWRRQHLAALIARFRHGAEALGLTLMDSFTPIQPILVGGSRQAVALAGMLRARGIMVGAIRPPTVPANSARLRVTLSAAHSEAQVDRLLEALGESWRQLSSSLLAEIEAEEGDDA.

Arg19 contacts substrate. Position 106-107 (106-107 (GY)) interacts with pyridoxal 5'-phosphate. His131 lines the substrate pocket. Positions 176, 204, and 233 each coordinate pyridoxal 5'-phosphate. An N6-(pyridoxal phosphate)lysine modification is found at Lys236. Substrate is bound at residue Thr350.

It belongs to the class-II pyridoxal-phosphate-dependent aminotransferase family. BioF subfamily. Homodimer. Requires pyridoxal 5'-phosphate as cofactor.

It carries out the reaction 6-carboxyhexanoyl-[ACP] + L-alanine + H(+) = (8S)-8-amino-7-oxononanoate + holo-[ACP] + CO2. It participates in cofactor biosynthesis; biotin biosynthesis. In terms of biological role, catalyzes the decarboxylative condensation of pimeloyl-[acyl-carrier protein] and L-alanine to produce 8-amino-7-oxononanoate (AON), [acyl-carrier protein], and carbon dioxide. This chain is 8-amino-7-oxononanoate synthase, found in Pseudomonas aeruginosa (strain LESB58).